The primary structure comprises 116 residues: MSLKLACVVVLCMVVGAPLAQGAVTSGQVTNSLAPCINYLRGSGAGAVPPGCCTGIKSLNSAAQTTPVRQAACRCIKSAAAGITGINFGLASGLPGKCGVNIPYKISPSTDCNSVK.

The N-terminal stretch at 1-22 is a signal peptide; sequence MSLKLACVVVLCMVVGAPLAQG. 3 cysteine pairs are disulfide-bonded: cysteine 36/cysteine 52, cysteine 53/cysteine 98, and cysteine 73/cysteine 112.

This sequence belongs to the plant LTP family.

Functionally, plant non-specific lipid-transfer proteins transfer phospholipids as well as galactolipids across membranes. May play a role in wax or cutin deposition in the cell walls of expanding epidermal cells and certain secretory tissues. This chain is Non-specific lipid-transfer protein, found in Gossypium hirsutum (Upland cotton).